Consider the following 501-residue polypeptide: Nuclear receptor-binding protein 2 (501 aa).

Residues 1 to 33 (MAAPEPAPRRAREREREREDESEDESDILEESP) form a disordered region. Residues 7–19 (APRRARERERERE) show a composition bias toward basic and acidic residues. Residues 20–30 (DESEDESDILE) are compositionally biased toward acidic residues. A Protein kinase domain is found at 38 to 306 (QKRREQVNQG…AHSLLFHRVL (269 aa)). 2 positions are modified to phosphothreonine: threonine 409 and threonine 411.

The protein belongs to the protein kinase superfamily. Ser/Thr protein kinase family.

The protein resides in the cytoplasm. Its function is as follows. May regulate apoptosis of neural progenitor cells during their differentiation. This is Nuclear receptor-binding protein 2 from Homo sapiens (Human).